A 357-amino-acid polypeptide reads, in one-letter code: 3-isopropylmalate dehydrogenase (357 aa).

Position 77 to 90 (77 to 90 (GPKWDNLEGSKRPE)) interacts with NAD(+). Substrate is bound by residues R97, R107, R136, and D224. 3 residues coordinate Mg(2+): D224, D248, and D252. 282–294 (GSAPDIAGLDIAN) contributes to the NAD(+) binding site.

Belongs to the isocitrate and isopropylmalate dehydrogenases family. LeuB type 1 subfamily. Homodimer. Mg(2+) serves as cofactor. Mn(2+) is required as a cofactor.

Its subcellular location is the cytoplasm. The enzyme catalyses (2R,3S)-3-isopropylmalate + NAD(+) = 4-methyl-2-oxopentanoate + CO2 + NADH. It functions in the pathway amino-acid biosynthesis; L-leucine biosynthesis; L-leucine from 3-methyl-2-oxobutanoate: step 3/4. In terms of biological role, catalyzes the oxidation of 3-carboxy-2-hydroxy-4-methylpentanoate (3-isopropylmalate) to 3-carboxy-4-methyl-2-oxopentanoate. The product decarboxylates to 4-methyl-2 oxopentanoate. The sequence is that of 3-isopropylmalate dehydrogenase (leuB) from Clostridium pasteurianum.